We begin with the raw amino-acid sequence, 251 residues long: tRNA pseudouridine synthase A (251 aa).

Residue aspartate 52 is the Nucleophile of the active site. Tyrosine 113 serves as a coordination point for substrate.

It belongs to the tRNA pseudouridine synthase TruA family. Homodimer.

It catalyses the reaction uridine(38/39/40) in tRNA = pseudouridine(38/39/40) in tRNA. Formation of pseudouridine at positions 38, 39 and 40 in the anticodon stem and loop of transfer RNAs. The protein is tRNA pseudouridine synthase A of Brucella abortus (strain 2308).